We begin with the raw amino-acid sequence, 188 residues long: Holliday junction branch migration complex subunit RuvA (188 aa).

Positions 1–63 (MIEIIEGIYK…QEDMTIYGFD (63 aa)) are domain I. A domain II region spans residues 64 to 142 (SKVKKETFEK…VVEVNEEMLE (79 aa)). Glutamate 142 is a region of interest (flexible linker). The segment at 142–188 (EAIEALVSLGYSKTQARNAVSKVLKESPNISNVSKIIKEALKILAKI) is domain III.

This sequence belongs to the RuvA family. As to quaternary structure, homotetramer. Forms an RuvA(8)-RuvB(12)-Holliday junction (HJ) complex. HJ DNA is sandwiched between 2 RuvA tetramers; dsDNA enters through RuvA and exits via RuvB. An RuvB hexamer assembles on each DNA strand where it exits the tetramer. Each RuvB hexamer is contacted by two RuvA subunits (via domain III) on 2 adjacent RuvB subunits; this complex drives branch migration. In the full resolvosome a probable DNA-RuvA(4)-RuvB(12)-RuvC(2) complex forms which resolves the HJ.

Its subcellular location is the cytoplasm. In terms of biological role, the RuvA-RuvB-RuvC complex processes Holliday junction (HJ) DNA during genetic recombination and DNA repair, while the RuvA-RuvB complex plays an important role in the rescue of blocked DNA replication forks via replication fork reversal (RFR). RuvA specifically binds to HJ cruciform DNA, conferring on it an open structure. The RuvB hexamer acts as an ATP-dependent pump, pulling dsDNA into and through the RuvAB complex. HJ branch migration allows RuvC to scan DNA until it finds its consensus sequence, where it cleaves and resolves the cruciform DNA. This chain is Holliday junction branch migration complex subunit RuvA, found in Fervidobacterium nodosum (strain ATCC 35602 / DSM 5306 / Rt17-B1).